Reading from the N-terminus, the 601-residue chain is ATP-dependent lipid A-core flippase (601 aa).

Transmembrane regions (helical) follow at residues 33–53 (CVAV…AKLI), 72–92 (VSLM…LSEY), 158–178 (VIGL…VFLV), 255–275 (LGGG…LYVV), and 283–303 (TITP…LSPI). In terms of domain architecture, ABC transmembrane type-1 spans 34 to 315 (VAVVAMIAYA…LSQVVSVMQR (282 aa)). The ABC transporter domain occupies 347 to 583 (IEYRHVSLVY…RGGYADLYAM (237 aa)). An ATP-binding site is contributed by 381 to 388 (GQSGSGKT).

It belongs to the ABC transporter superfamily. Lipid exporter (TC 3.A.1.106) family. Homodimer.

It is found in the cell inner membrane. The catalysed reaction is ATP + H2O + lipid A-core oligosaccharideSide 1 = ADP + phosphate + lipid A-core oligosaccharideSide 2.. In terms of biological role, involved in lipopolysaccharide (LPS) biosynthesis. Translocates lipid A-core from the inner to the outer leaflet of the inner membrane. Transmembrane domains (TMD) form a pore in the inner membrane and the ATP-binding domain (NBD) is responsible for energy generation. The polypeptide is ATP-dependent lipid A-core flippase (Methylococcus capsulatus (strain ATCC 33009 / NCIMB 11132 / Bath)).